A 574-amino-acid polypeptide reads, in one-letter code: MAGVQQGEKQLFEKFWRGTFKAVATPRPESIIVASITARRAVTKLETPVGPKDDEEKVKAKDLVTKTHEKNGHIKRRGRKRHSHRRARSVSFDADLSPRPVPKTKKKKKKSQRKRRRHRSPSCSPSPVRKKKKKKSSKKRKRHRSASRKGRHSGSSSRRKRKEDKKHKKRSRSHSHRRHRHRKAEIRSSSCMENRSEDCEKSGFRDGGRSSDVHGGDACRSAVKLTNKISSKCCCHFSESTVSPSRSGVEGLSKVVIVQNSESSDGKRRADYDSGNDTSSPPSSKTGITRSKVAGNGKFSCLTSPEKLRLADGDNASDSGNSLTSYDSLGKPLLRENTLHSSVFSKLKGEESGRFCVDVEKTQPLDLISDRNRSPSHDRYEDGTRSRSRSISSQSRYSGRHSRSRSLSSGRRSYSRSSSYSLASRRDSLSSVSSCRSLNHSRCTTHRFRERKRYCSSCKSRKHSRRRPSSPMRKRRRDSPSHLEARRITSARKRPIPYYRPSPSVSSRSSSILSWRLFPLTRSRTRSRSCSRSRSRSHSHTYSSYRSYSRSSSWNSLYSRRSRSRSRSYSRARR.

5 disordered regions span residues 45–217 (LETP…HGGD), 257–291 (IVQN…ITRS), 366–422 (DLIS…SYSL), 454–508 (YCSS…VSSR), and 526–574 (RSRS…RARR). The span at 51–72 (PKDDEEKVKAKDLVTKTHEKNG) shows a compositional bias: basic and acidic residues. Composition is skewed to basic residues over residues 73–88 (HIKR…RRAR), 102–120 (PKTK…RHRS), and 128–184 (VRKK…HRKA). Residues 194–217 (NRSEDCEKSGFRDGGRSSDVHGGD) show a composition bias toward basic and acidic residues. Residues 275 to 289 (GNDTSSPPSSKTGIT) are compositionally biased toward polar residues. The segment covering 366–385 (DLISDRNRSPSHDRYEDGTR) has biased composition (basic and acidic residues). Low complexity predominate over residues 405 to 422 (RSLSSGRRSYSRSSSYSL). Residues 454–477 (YCSSCKSRKHSRRRPSSPMRKRRR) are compositionally biased toward basic residues. Positions 478 to 487 (DSPSHLEARR) are enriched in basic and acidic residues. Residues 496-508 (IPYYRPSPSVSSR) are compositionally biased toward low complexity. The span at 526 to 539 (RSRSCSRSRSRSHS) shows a compositional bias: basic residues. Low complexity predominate over residues 540–559 (HTYSSYRSYSRSSSWNSLYS). Positions 560–574 (RRSRSRSRSYSRARR) are enriched in basic residues.

It belongs to the nSR100 family.

The protein localises to the nucleus. Functionally, splicing factor specifically required for neural cell differentiation. Acts in conjunction with nPTB/PTBP2 by binding directly to its regulated target transcripts and promotes neural-specific exon inclusion in many genes that function in neural cell differentiation. Required to promote the inclusion of neural-specific exon 10 in nPTB/PTBP2, leading to increased expression of neural-specific nPTB/PTBP2. This chain is Serine/arginine repetitive matrix protein 4 (srrm4), found in Danio rerio (Zebrafish).